Here is a 339-residue protein sequence, read N- to C-terminus: Ketol-acid reductoisomerase (NADP(+)) (339 aa).

The region spanning 1 to 182 is the KARI N-terminal Rossmann domain; sequence MRVYYDRDAD…GGGRAGIIET (182 aa). NADP(+)-binding positions include 24 to 27, Arg-48, Ser-51, Ser-53, and 83 to 86; these read YGSQ and DELQ. The active site involves His-108. Position 134 (Gly-134) interacts with NADP(+). In terms of domain architecture, KARI C-terminal knotted spans 183 to 328; it reads TFKEECETDL…EKLREMMPWI (146 aa). Mg(2+)-binding residues include Asp-191, Glu-195, Glu-227, and Glu-231. Position 252 (Ser-252) interacts with substrate.

This sequence belongs to the ketol-acid reductoisomerase family. Mg(2+) serves as cofactor.

The enzyme catalyses (2R)-2,3-dihydroxy-3-methylbutanoate + NADP(+) = (2S)-2-acetolactate + NADPH + H(+). The catalysed reaction is (2R,3R)-2,3-dihydroxy-3-methylpentanoate + NADP(+) = (S)-2-ethyl-2-hydroxy-3-oxobutanoate + NADPH + H(+). The protein operates within amino-acid biosynthesis; L-isoleucine biosynthesis; L-isoleucine from 2-oxobutanoate: step 2/4. It participates in amino-acid biosynthesis; L-valine biosynthesis; L-valine from pyruvate: step 2/4. Its function is as follows. Involved in the biosynthesis of branched-chain amino acids (BCAA). Catalyzes an alkyl-migration followed by a ketol-acid reduction of (S)-2-acetolactate (S2AL) to yield (R)-2,3-dihydroxy-isovalerate. In the isomerase reaction, S2AL is rearranged via a Mg-dependent methyl migration to produce 3-hydroxy-3-methyl-2-ketobutyrate (HMKB). In the reductase reaction, this 2-ketoacid undergoes a metal-dependent reduction by NADPH to yield (R)-2,3-dihydroxy-isovalerate. The chain is Ketol-acid reductoisomerase (NADP(+)) from Azorhizobium caulinodans (strain ATCC 43989 / DSM 5975 / JCM 20966 / LMG 6465 / NBRC 14845 / NCIMB 13405 / ORS 571).